Consider the following 348-residue polypeptide: Dihydroorotase (348 aa).

2 residues coordinate Zn(2+): His-17 and His-19. Residues 19 to 21 (HLR) and Asn-45 contribute to the substrate site. Zn(2+) contacts are provided by Lys-103, His-140, and His-178. Lys-103 is modified (N6-carboxylysine). His-140 contacts substrate. Leu-223 is a substrate binding site. A Zn(2+)-binding site is contributed by Asp-251. Asp-251 is a catalytic residue. Residues His-255 and Ala-267 each coordinate substrate.

Belongs to the metallo-dependent hydrolases superfamily. DHOase family. Class II DHOase subfamily. As to quaternary structure, homodimer. It depends on Zn(2+) as a cofactor.

The enzyme catalyses (S)-dihydroorotate + H2O = N-carbamoyl-L-aspartate + H(+). It participates in pyrimidine metabolism; UMP biosynthesis via de novo pathway; (S)-dihydroorotate from bicarbonate: step 3/3. Its function is as follows. Catalyzes the reversible cyclization of carbamoyl aspartate to dihydroorotate. The chain is Dihydroorotase from Salmonella paratyphi C (strain RKS4594).